Here is a 342-residue protein sequence, read N- to C-terminus: GTP 3',8-cyclase (342 aa).

Positions 18 to 247 (GFSRRFYYLR…QLRGADDGPA (230 aa)) constitute a Radical SAM core domain. A GTP-binding site is contributed by Arg-27. Positions 34 and 38 each coordinate [4Fe-4S] cluster. S-adenosyl-L-methionine is bound at residue Tyr-40. Cys-41 is a binding site for [4Fe-4S] cluster. Residue Arg-81 participates in GTP binding. Residue Gly-85 coordinates S-adenosyl-L-methionine. Residue Thr-112 coordinates GTP. Position 136 (Ser-136) interacts with S-adenosyl-L-methionine. Lys-173 provides a ligand contact to GTP. Met-207 lines the S-adenosyl-L-methionine pocket. Positions 270 and 273 each coordinate [4Fe-4S] cluster. 275-277 (RLR) is a GTP binding site. Cys-287 is a binding site for [4Fe-4S] cluster.

This sequence belongs to the radical SAM superfamily. MoaA family. Monomer and homodimer. Requires [4Fe-4S] cluster as cofactor.

It carries out the reaction GTP + AH2 + S-adenosyl-L-methionine = (8S)-3',8-cyclo-7,8-dihydroguanosine 5'-triphosphate + 5'-deoxyadenosine + L-methionine + A + H(+). Its pathway is cofactor biosynthesis; molybdopterin biosynthesis. Its function is as follows. Catalyzes the cyclization of GTP to (8S)-3',8-cyclo-7,8-dihydroguanosine 5'-triphosphate. The sequence is that of GTP 3',8-cyclase from Aeromonas hydrophila subsp. hydrophila (strain ATCC 7966 / DSM 30187 / BCRC 13018 / CCUG 14551 / JCM 1027 / KCTC 2358 / NCIMB 9240 / NCTC 8049).